The primary structure comprises 285 residues: 4-diphosphocytidyl-2-C-methyl-D-erythritol kinase (285 aa).

Residue lysine 10 is part of the active site. Proline 93 to serine 103 is an ATP binding site. The active site involves aspartate 135.

Belongs to the GHMP kinase family. IspE subfamily.

The catalysed reaction is 4-CDP-2-C-methyl-D-erythritol + ATP = 4-CDP-2-C-methyl-D-erythritol 2-phosphate + ADP + H(+). The protein operates within isoprenoid biosynthesis; isopentenyl diphosphate biosynthesis via DXP pathway; isopentenyl diphosphate from 1-deoxy-D-xylulose 5-phosphate: step 3/6. Its function is as follows. Catalyzes the phosphorylation of the position 2 hydroxy group of 4-diphosphocytidyl-2C-methyl-D-erythritol. The chain is 4-diphosphocytidyl-2-C-methyl-D-erythritol kinase from Ruthia magnifica subsp. Calyptogena magnifica.